Consider the following 227-residue polypeptide: MRNIILFAAGTLLLSGCVSTQNSDVVQDDPYYAPMYPEPNVEPAVANGSLFNTYLSNDLYADKKALRTGDIITVKLQESTQASKAAKTETDKQSDAKLDPVIGLGGLPVNIGGDSIQFGIGSDASFKGDSKSNQSNSLAGDISVNVMRVLPNGNLVIRGEKWLTLNSGEEFIRLEGLVRPEDVTADNTVQSNRIANARIQYSGKGQTQEAQSAGWLTRFFSSSLFPF.

Residues 1 to 16 form the signal peptide; it reads MRNIILFAAGTLLLSG. A lipid anchor (N-palmitoyl cysteine) is attached at cysteine 17. The S-diacylglycerol cysteine moiety is linked to residue cysteine 17.

This sequence belongs to the FlgH family. The basal body constitutes a major portion of the flagellar organelle and consists of four rings (L,P,S, and M) mounted on a central rod.

It localises to the cell outer membrane. The protein localises to the bacterial flagellum basal body. In terms of biological role, assembles around the rod to form the L-ring and probably protects the motor/basal body from shearing forces during rotation. The polypeptide is Flagellar L-ring protein (Pseudoalteromonas translucida (strain TAC 125)).